The chain runs to 181 residues: Large ribosomal subunit protein uL5 (181 aa).

This sequence belongs to the universal ribosomal protein uL5 family. In terms of assembly, part of the 50S ribosomal subunit; part of the 5S rRNA/L5/L18/L25 subcomplex. Contacts the 5S rRNA and the P site tRNA. Forms a bridge to the 30S subunit in the 70S ribosome.

This is one of the proteins that bind and probably mediate the attachment of the 5S RNA into the large ribosomal subunit, where it forms part of the central protuberance. In the 70S ribosome it contacts protein S13 of the 30S subunit (bridge B1b), connecting the 2 subunits; this bridge is implicated in subunit movement. Contacts the P site tRNA; the 5S rRNA and some of its associated proteins might help stabilize positioning of ribosome-bound tRNAs. In Clostridium kluyveri (strain NBRC 12016), this protein is Large ribosomal subunit protein uL5.